We begin with the raw amino-acid sequence, 344 residues long: 4-hydroxy-2-oxovalerate aldolase (344 aa).

The region spanning 8-260 is the Pyruvate carboxyltransferase domain; sequence VTLHDMSLRD…NHGIDLYKIM (253 aa). 16–17 is a substrate binding site; the sequence is RD. Residue D17 participates in Mn(2+) binding. H20 (proton acceptor) is an active-site residue. Residues S170 and H199 each coordinate substrate. Residues H199 and H201 each contribute to the Mn(2+) site. Position 290 (Y290) interacts with substrate.

It belongs to the 4-hydroxy-2-oxovalerate aldolase family.

It carries out the reaction (S)-4-hydroxy-2-oxopentanoate = acetaldehyde + pyruvate. The sequence is that of 4-hydroxy-2-oxovalerate aldolase (mhpE) from Pseudoalteromonas translucida (strain TAC 125).